Consider the following 284-residue polypeptide: Insulin-like growth factor-binding protein 2 (284 aa).

The N-terminal stretch at 1–21 (MGLSRYLLGLLLGVLCTPAPA) is a signal peptide. In terms of domain architecture, IGFBP N-terminal spans 23–106 (VLFRCPPCSP…VLGLGTCGKR (84 aa)). 6 disulfides stabilise this stretch: Cys-27/Cys-56, Cys-30/Cys-58, Cys-38/Cys-59, Cys-47/Cys-62, Cys-70/Cys-83, and Cys-77/Cys-103. Residues 108–184 (DTEYGSSQER…KSEDKKRPAR (77 aa)) are disordered. Over residues 117–127 (RGTELPEERSD) the composition is skewed to basic and acidic residues. Low complexity predominate over residues 136–145 (EAGPAVAGEA). The segment covering 152–180 (KKEMKEIAVTRERANEQQRSKSNKSEDKK) has biased composition (basic and acidic residues). The Thyroglobulin type-1 domain maps to 184–266 (RSLCQLQLDQ…SPTIRGDPEC (83 aa)). Cystine bridges form between Cys-187-Cys-221, Cys-232-Cys-243, and Cys-245-Cys-266. The short motif at 261–263 (RGD) is the Cell attachment site element.

As to quaternary structure, interacts with igf1 and igf2.

The protein resides in the secreted. In terms of biological role, IGF-binding proteins prolong the half-life of the IGFs and have been shown to either inhibit or stimulate the growth promoting effects of the IGFs on cell culture. They alter the interaction of IGFs with their cell surface receptors. The chain is Insulin-like growth factor-binding protein 2 from Xenopus tropicalis (Western clawed frog).